The chain runs to 76 residues: Kappa-actitoxin-Avd4n (76 aa).

The N-terminal stretch at 1–19 is a signal peptide; that stretch reads MNKAFFLCLVVLCAAVVFA. A propeptide spanning residues 20–31 is cleaved from the precursor; it reads AEDLQKGKHAPF. 2 cysteine pairs are disulfide-bonded: Cys37–Cys72 and Cys39–Cys65.

This sequence belongs to the sea anemone type 3 (BDS) potassium channel toxin family. Post-translationally, lacks the conventional Cys residue at position 55. Thus, only 2 disulfide are possible present. In terms of tissue distribution, experimental results show no expression in the ectodermal tissue from the distal and proximal tentacles, body wall, and oral disk. Since paralogs are expressed in this tissue, an expression of this toxin in this tissue is probable. The negative results could be explained by the very low abundance of EST sequences.

It is found in the secreted. The protein localises to the nematocyst. Its function is as follows. Blocks Kv3 voltage-gated potassium channels. Reduces blood pressure. In Anemonia viridis (Snakelocks anemone), this protein is Kappa-actitoxin-Avd4n.